Consider the following 1377-residue polypeptide: DNA-directed RNA polymerase subunit beta' (1377 aa).

4 residues coordinate Zn(2+): C60, C62, C75, and C78. Mg(2+)-binding residues include D449, D451, and D453. Positions 777, 851, 858, and 861 each coordinate Zn(2+).

This sequence belongs to the RNA polymerase beta' chain family. In terms of assembly, the RNAP catalytic core consists of 2 alpha, 1 beta, 1 beta' and 1 omega subunit. When a sigma factor is associated with the core the holoenzyme is formed, which can initiate transcription. Mg(2+) is required as a cofactor. It depends on Zn(2+) as a cofactor.

It carries out the reaction RNA(n) + a ribonucleoside 5'-triphosphate = RNA(n+1) + diphosphate. Its function is as follows. DNA-dependent RNA polymerase catalyzes the transcription of DNA into RNA using the four ribonucleoside triphosphates as substrates. In Borreliella burgdorferi (strain ZS7) (Borrelia burgdorferi), this protein is DNA-directed RNA polymerase subunit beta'.